Consider the following 75-residue polypeptide: UPF0352 protein ASA_2693 (75 aa).

It belongs to the UPF0352 family.

The sequence is that of UPF0352 protein ASA_2693 from Aeromonas salmonicida (strain A449).